A 392-amino-acid chain; its full sequence is Autophagy-related protein 21 (392 aa).

2 WD repeats span residues 200 to 240 and 250 to 289; these read VHQS…NDEP and SRPS…TEAD. Residues 246 to 250 carry the L/FRRG motif motif; that stretch reads FRRGS.

The protein belongs to the WD repeat PROPPIN family.

It localises to the cytoplasm. The protein localises to the membrane. It is found in the vacuole membrane. In terms of biological role, required for cytoplasm to vacuole transport (Cvt) vesicles formation and mitophagy. Involved in binding of phosphatidylethanolamine to ATG8 and in recruitment of ATG8 and ATG5 to the pre-autophagosomal structure. Protects ATG8 from ARG4-mediated cleavage. This Kluyveromyces lactis (strain ATCC 8585 / CBS 2359 / DSM 70799 / NBRC 1267 / NRRL Y-1140 / WM37) (Yeast) protein is Autophagy-related protein 21 (ATG21).